The following is a 545-amino-acid chain: MADQQTLDSSTPPPTQSDDLSHSHSTSSTTSASSSSDPSLLRSLSLSRLNAGAPEFVPGRTTPPLPQPPRMIIPPPPPHGMLHMYHHQPPFNTPVLGPVPIQPHLVPVQNHHPHHRFHQHHHHNRHQNQQYVPVRNHGEYQQRGGVGGEQEPDLVSKKNDRRDHSKRESKNDQVTETGASVSIDSKTGLPEDSIQKIVNQVEYYFSDLNLATTDHLMRFICKDPEGYVPIHVVASFKKIKAVINNNSQLAAVLQNSAKLFVSEDGKKVRRISPITESAIEELQSRIIVAENLPEDHCYQNLMKIFSTVGSVKNIRTCQPQNNGSGAPPAARSAAKSDGTLFSNKVHAFVEYEIVELAERAVTELSEAGNWRSGLKVRLMLKHQTKEPKQGQGRGRKGHDADVEHEEDDATTSEQQPIEKQSDDCSGEWDTHMQEQPIGEDQGNEKAAGQRKGRNRGRGKGRGRGQPHQNQNQNNNHSHNQNHNHNGRGNHHHHHHHQVGTQPSNNPMNNMEQPGMGKQQPPGPRMPDGTRGFSMGRGKPVMVQAE.

Residues 1–10 are compositionally biased toward polar residues; sequence MADQQTLDSS. 3 disordered regions span residues 1 to 76, 105 to 187, and 382 to 545; these read MADQ…IPPP, LVPV…DSKT, and HQTK…VQAE. Low complexity predominate over residues 23-49; the sequence is SHSTSSTTSASSSSDPSLLRSLSLSRL. The segment covering 61–76 has biased composition (pro residues); that stretch reads TTPPLPQPPRMIIPPP. Positions 111 to 126 are enriched in basic residues; sequence HHPHHRFHQHHHHNRH. Positions 154 to 173 are enriched in basic and acidic residues; sequence LVSKKNDRRDHSKRESKNDQ. Residues 174-185 are compositionally biased toward polar residues; the sequence is VTETGASVSIDS. The 92-residue stretch at 187-278 folds into the HTH La-type RNA-binding domain; the sequence is TGLPEDSIQK…RRISPITESA (92 aa). An RRM domain is found at 285–383; it reads RIIVAENLPE…LKVRLMLKHQ (99 aa). Residues 448–464 show a composition bias toward basic residues; that stretch reads GQRKGRNRGRGKGRGRG. The segment covering 465–478 has biased composition (low complexity); that stretch reads QPHQNQNQNNNHSH. Over residues 479 to 497 the composition is skewed to basic residues; that stretch reads NQNHNHNGRGNHHHHHHHQ. Positions 498-509 are enriched in polar residues; the sequence is VGTQPSNNPMNN. The segment covering 510 to 519 has biased composition (low complexity); sequence MEQPGMGKQQ.

The protein resides in the nucleus. Functionally, transcriptional regulator. The sequence is that of La-related protein 6B (LARP6B) from Arabidopsis thaliana (Mouse-ear cress).